The chain runs to 438 residues: Enolase (438 aa).

Substrate contacts are provided by His159 and Glu168. Glu211 functions as the Proton donor in the catalytic mechanism. Asp246, Glu297, and Asp322 together coordinate Mg(2+). The substrate site is built by Glu297 and Asp322. Lys347 serves as the catalytic Proton acceptor. Residues Ser374–Ser377 and Lys398 contribute to the substrate site.

Belongs to the enolase family. In terms of assembly, homodimer. Requires Mg(2+) as cofactor.

The protein resides in the cytoplasm. It carries out the reaction (2R)-2-phosphoglycerate = phosphoenolpyruvate + H2O. Its pathway is carbohydrate degradation; glycolysis; pyruvate from D-glyceraldehyde 3-phosphate: step 4/5. This is Enolase (enoA) from Aspergillus fumigatus (strain ATCC MYA-4609 / CBS 101355 / FGSC A1100 / Af293) (Neosartorya fumigata).